Here is a 105-residue protein sequence, read N- to C-terminus: Prokineticin-1 (105 aa).

The N-terminal stretch at 1–19 is a signal peptide; that stretch reads MRGAVHIFIMLLLATASDC. 5 cysteine pairs are disulfide-bonded: Cys-26/Cys-38, Cys-32/Cys-50, Cys-37/Cys-78, Cys-60/Cys-86, and Cys-80/Cys-96.

Belongs to the AVIT (prokineticin) family. In terms of tissue distribution, highly expressed in liver and ovary and weakly expressed in testis and placenta. Expressed in mucosa and mesenchyme of embryonic gut during enteric nervous system development (at protein level). Predominantly expressed in kidney and liver. Also expressed in lung, ovary, placenta and testis. In fetal liver, is restricted to and highly expressed in hepatocytes. In adult kidney, expression is restricted to the endothelial tubule cells. In placenta, expressed throughout gestation.

It localises to the secreted. In terms of biological role, potently contracts gastrointestinal (GI) smooth muscle. Induces proliferation, migration and fenestration (the formation of membrane discontinuities) in capillary endothelial cells. Induces proliferation and differentiation, but not migration, of enteric neural crest cells. Directly influences neuroblastoma progression by promoting the proliferation and migration of neuroblastoma cells. Positively regulates PTGS2 expression and prostaglandin synthesis. May play a role in placentation. May play a role in normal and pathological testis angiogenesis. This chain is Prokineticin-1, found in Mus musculus (Mouse).